Reading from the N-terminus, the 195-residue chain is dTTP/UTP pyrophosphatase (195 aa).

The Proton acceptor role is filled by Asp-73.

It belongs to the Maf family. YhdE subfamily. A divalent metal cation is required as a cofactor.

It is found in the cytoplasm. It catalyses the reaction dTTP + H2O = dTMP + diphosphate + H(+). The enzyme catalyses UTP + H2O = UMP + diphosphate + H(+). Functionally, nucleoside triphosphate pyrophosphatase that hydrolyzes dTTP and UTP. May have a dual role in cell division arrest and in preventing the incorporation of modified nucleotides into cellular nucleic acids. This is dTTP/UTP pyrophosphatase from Desulfotalea psychrophila (strain LSv54 / DSM 12343).